The following is a 516-amino-acid chain: D-aminopeptidase (516 aa).

Ser61 acts as the Nucleophile in catalysis. Catalysis depends on Lys64, which acts as the Proton donor/acceptor. Positions 476–486 are important for specificity; that stretch reads RRSMDAPAPGD. Asp480 contacts substrate.

It belongs to the peptidase S12 family. In terms of assembly, homodimer.

The enzyme catalyses Release of an N-terminal D-amino acid from a peptide, Xaa-|-Yaa-, in which Xaa is preferably D-Ala, D-Ser or D-Thr. D-amino acid amides and methyl esters also are hydrolyzed, as is glycine amide.. Its activity is regulated as follows. Inhibited by beta-lactam compounds such as 6-aminopenicillic acid, 7-aminocephalosporanic acid, benzylpenicillin and ampicillin. Inhibited by p-chloromercuribenzoate. In terms of biological role, hydrolyzes N-terminal residues in D-amino acid-containing peptides. In Cereibacter sphaeroides (strain KD131 / KCTC 12085) (Rhodobacter sphaeroides), this protein is D-aminopeptidase.